Here is a 407-residue protein sequence, read N- to C-terminus: Phosphopentomutase (407 aa).

Mn(2+) contacts are provided by D10, D306, H311, D347, H348, and H359.

The protein belongs to the phosphopentomutase family. The cofactor is Mn(2+).

It is found in the cytoplasm. The enzyme catalyses 2-deoxy-alpha-D-ribose 1-phosphate = 2-deoxy-D-ribose 5-phosphate. The catalysed reaction is alpha-D-ribose 1-phosphate = D-ribose 5-phosphate. Its pathway is carbohydrate degradation; 2-deoxy-D-ribose 1-phosphate degradation; D-glyceraldehyde 3-phosphate and acetaldehyde from 2-deoxy-alpha-D-ribose 1-phosphate: step 1/2. Its function is as follows. Isomerase that catalyzes the conversion of deoxy-ribose 1-phosphate (dRib-1-P) and ribose 1-phosphate (Rib-1-P) to deoxy-ribose 5-phosphate (dRib-5-P) and ribose 5-phosphate (Rib-5-P), respectively. This is Phosphopentomutase from Buchnera aphidicola subsp. Acyrthosiphon pisum (strain Tuc7).